The sequence spans 404 residues: ORC1-type DNA replication protein 2 (404 aa).

ATP is bound by residues 64-68 (TGKTS), Tyr-205, and Arg-217.

It belongs to the CDC6/cdc18 family. As to quaternary structure, interacts with MCM.

Its function is as follows. Involved in regulation of DNA replication. Stimulates the helicase activity of MCM via stimulation of its ATPase activity. Binding to MCM may result in conformational changes in MCM, leading to catalytic ATP hydrolysis by the helicase. Directly stimulates MCM movement along single-stranded and double-stranded DNA. Does not bind DNA. The polypeptide is ORC1-type DNA replication protein 2 (cdc6-2) (Thermoplasma acidophilum (strain ATCC 25905 / DSM 1728 / JCM 9062 / NBRC 15155 / AMRC-C165)).